The primary structure comprises 114 residues: Large ribosomal subunit protein bL21c (114 aa).

It belongs to the bacterial ribosomal protein bL21 family. As to quaternary structure, part of the 50S ribosomal subunit.

The protein localises to the plastid. It is found in the chloroplast. Functionally, this protein binds to 23S rRNA. The chain is Large ribosomal subunit protein bL21c from Staurastrum punctulatum (Green alga).